The chain runs to 901 residues: Putative serine/threonine-protein kinase YPL150W (901 aa).

In terms of domain architecture, Protein kinase spans 41-287 (YKILKQIGEG…LSQVLRHPFL (247 aa)). ATP contacts are provided by residues 47–55 (IGEGSFGKV) and Lys70. Asp157 functions as the Proton acceptor in the catalytic mechanism. Ser456 carries the post-translational modification Phosphoserine. Residues 500-530 (APSSGSFLKKNSGSIQKSRTDTVANPSRTES) are disordered. Position 533 is a phosphoserine (Ser533). Residues 588-599 (SSISSEISQTST) are compositionally biased toward low complexity. Disordered regions lie at residues 588–629 (SSIS…NRPL) and 745–770 (TQRPWTGKRTYTTSRHGKNARRSSKR). Residues 600 to 613 (GNYDSESAENSRSI) show a composition bias toward polar residues. The span at 759–770 (RHGKNARRSSKR) shows a compositional bias: basic residues.

This sequence belongs to the protein kinase superfamily. Ser/Thr protein kinase family.

The catalysed reaction is L-seryl-[protein] + ATP = O-phospho-L-seryl-[protein] + ADP + H(+). It catalyses the reaction L-threonyl-[protein] + ATP = O-phospho-L-threonyl-[protein] + ADP + H(+). Putative serine/threonine-protein kinase. This is Putative serine/threonine-protein kinase YPL150W from Saccharomyces cerevisiae (strain ATCC 204508 / S288c) (Baker's yeast).